The primary structure comprises 591 residues: DNA ligase (591 aa).

NAD(+) is bound by residues 38–42 (DEKYD), 87–88 (SL), and Glu119. Lys121 acts as the N6-AMP-lysine intermediate in catalysis. 4 residues coordinate NAD(+): Arg142, Glu181, Lys298, and Lys322. Zn(2+)-binding residues include Cys415, Cys418, Cys433, and Cys439.

It belongs to the NAD-dependent DNA ligase family. LigA subfamily. Mg(2+) is required as a cofactor. It depends on Mn(2+) as a cofactor.

The catalysed reaction is NAD(+) + (deoxyribonucleotide)n-3'-hydroxyl + 5'-phospho-(deoxyribonucleotide)m = (deoxyribonucleotide)n+m + AMP + beta-nicotinamide D-nucleotide.. Its function is as follows. DNA ligase that catalyzes the formation of phosphodiester linkages between 5'-phosphoryl and 3'-hydroxyl groups in double-stranded DNA using NAD as a coenzyme and as the energy source for the reaction. It is essential for DNA replication and repair of damaged DNA. The protein is DNA ligase of Wigglesworthia glossinidia brevipalpis.